A 422-amino-acid polypeptide reads, in one-letter code: Solute carrier family 35 member D3 (422 aa).

10 helical membrane-spanning segments follow: residues 9-29 (VLGI…NILL), 38-58 (FSFL…SLEL), 64-84 (LIAV…VAVL), 103-123 (MYVV…VLVL), 131-151 (GVLA…AGDL), 155-175 (PIGY…LVLI), 187-207 (LTAQ…CSFA), 224-244 (AMVS…FTTL), 257-277 (FVGV…FSDV), and 280-300 (TSLF…YCVA). The tract at residues 339-365 (AKSGNSEPESAEGAGDSVQQGGQESRG) is disordered. A compositionally biased stretch (polar residues) spans 355-364 (SVQQGGQESR).

The protein belongs to the TPT transporter family. SLC35D subfamily. Could interact with ATG14, BECN1 and PIK3C3 that form the PI3KC3-C1/AIC/autophagy initiation complex; enhancing the formation of the AIC and promoting autophagy. Expressed in brain. Expressed in subsets of dopaminergic neurons. Expressed in maturing megakaryocytes.

It is found in the cytoplasmic vesicle. It localises to the secretory vesicle. The protein resides in the synaptic vesicle membrane. The protein localises to the early endosome membrane. Its subcellular location is the endoplasmic reticulum membrane. It catalyses the reaction UDP-alpha-D-glucose(in) = UDP-alpha-D-glucose(out). Inhibited by proton uncouplers that directly abolish the proton electrochemical gradient. In terms of biological role, probable UDP-glucose transmembrane transporter involved in UDP-glucose transport from the cytosol to the lumen of synaptic vesicles. It is involved in platelet dense granules maturation. Its function is as follows. Alternatively, could function as a molecular adapter enhancing the formation of the PI3KC3-C1/AIC/autophagy initiation complex to promote autophagy in dopaminergic neurons. Could also regulate the plasma membrane localization of the D(1A) dopamine receptor/DRD1 and dopamine signaling. This Mus musculus (Mouse) protein is Solute carrier family 35 member D3.